Here is a 330-residue protein sequence, read N- to C-terminus: Ribosomal RNA small subunit methyltransferase C (330 aa).

The protein belongs to the methyltransferase superfamily. RsmC family. As to quaternary structure, monomer.

The protein localises to the cytoplasm. The enzyme catalyses guanosine(1207) in 16S rRNA + S-adenosyl-L-methionine = N(2)-methylguanosine(1207) in 16S rRNA + S-adenosyl-L-homocysteine + H(+). Functionally, specifically methylates the guanine in position 1207 of 16S rRNA in the 30S particle. This Haemophilus influenzae (strain ATCC 51907 / DSM 11121 / KW20 / Rd) protein is Ribosomal RNA small subunit methyltransferase C.